The primary structure comprises 356 residues: Molybdenum import ATP-binding protein ModC (356 aa).

Positions 1–232 (MEDIHARFHI…LDLPIRLGED (232 aa)) constitute an ABC transporter domain. An ATP-binding site is contributed by 33–40 (GHSGSGKT). In terms of domain architecture, Mop spans 291 to 356 (ETSVLNLLRG…VQVKSVALME (66 aa)).

Belongs to the ABC transporter superfamily. Molybdate importer (TC 3.A.1.8) family. The complex is composed of two ATP-binding proteins (ModC), two transmembrane proteins (ModB) and a solute-binding protein (ModA).

The protein localises to the cell inner membrane. The catalysed reaction is molybdate(out) + ATP + H2O = molybdate(in) + ADP + phosphate + H(+). Functionally, part of the ABC transporter complex ModABC involved in molybdenum import. Responsible for energy coupling to the transport system. The polypeptide is Molybdenum import ATP-binding protein ModC (Methylococcus capsulatus (strain ATCC 33009 / NCIMB 11132 / Bath)).